We begin with the raw amino-acid sequence, 1086 residues long: ATP-dependent helicase/deoxyribonuclease subunit B (1086 aa).

It belongs to the helicase family. AddB/RexB type 2 subfamily. In terms of assembly, heterodimer of AddA and RexB. The cofactor is Mg(2+).

In terms of biological role, the heterodimer acts as both an ATP-dependent DNA helicase and an ATP-dependent, dual-direction single-stranded exonuclease. Recognizes the chi site generating a DNA molecule suitable for the initiation of homologous recombination. This subunit has 5' -&gt; 3' nuclease activity but not helicase activity. The polypeptide is ATP-dependent helicase/deoxyribonuclease subunit B (Streptococcus uberis (strain ATCC BAA-854 / 0140J)).